The chain runs to 101 residues: Small ribosomal subunit protein uS14 (101 aa).

The protein belongs to the universal ribosomal protein uS14 family. As to quaternary structure, part of the 30S ribosomal subunit. Contacts proteins S3 and S10.

Functionally, binds 16S rRNA, required for the assembly of 30S particles and may also be responsible for determining the conformation of the 16S rRNA at the A site. This is Small ribosomal subunit protein uS14 from Caulobacter vibrioides (strain ATCC 19089 / CIP 103742 / CB 15) (Caulobacter crescentus).